Reading from the N-terminus, the 146-residue chain is MYRFKIYYPGKTKAKFIKEGIDHYIKLLSPFAKVELIELKEGHGDKEKVTEEESKTILNSLKGDFILLHRDGKSLSSTEFADFIKDKSLTQFVIGGVYGVNEAVFKAASFRLSLSSLTFTHEISRLLLLEQLYRAITIIHGKSYHY.

S-adenosyl-L-methionine contacts are provided by residues Leu68, Gly95, and 114–119 (LSSLTF).

The protein belongs to the RNA methyltransferase RlmH family. In terms of assembly, homodimer.

Its subcellular location is the cytoplasm. The catalysed reaction is pseudouridine(1915) in 23S rRNA + S-adenosyl-L-methionine = N(3)-methylpseudouridine(1915) in 23S rRNA + S-adenosyl-L-homocysteine + H(+). In terms of biological role, specifically methylates the pseudouridine at position 1915 (m3Psi1915) in 23S rRNA. This is Ribosomal RNA large subunit methyltransferase H from Thermodesulfovibrio yellowstonii (strain ATCC 51303 / DSM 11347 / YP87).